The sequence spans 338 residues: DNA-directed RNA polymerase subunit alpha (338 aa).

Residues 1 to 234 form an alpha N-terminal domain (alpha-NTD) region; sequence MIQKNWQELT…DQLNVFVNFE (234 aa). The segment at 250-338 is alpha C-terminal domain (alpha-CTD); it reads FNPALLKKVD…DLAKRFEEHY (89 aa).

This sequence belongs to the RNA polymerase alpha chain family. As to quaternary structure, homodimer. The RNAP catalytic core consists of 2 alpha, 1 beta, 1 beta' and 1 omega subunit. When a sigma factor is associated with the core the holoenzyme is formed, which can initiate transcription.

It carries out the reaction RNA(n) + a ribonucleoside 5'-triphosphate = RNA(n+1) + diphosphate. In terms of biological role, DNA-dependent RNA polymerase catalyzes the transcription of DNA into RNA using the four ribonucleoside triphosphates as substrates. The chain is DNA-directed RNA polymerase subunit alpha from Methylocella silvestris (strain DSM 15510 / CIP 108128 / LMG 27833 / NCIMB 13906 / BL2).